The chain runs to 300 residues: Protein FANTASTIC FOUR 4 (300 aa).

Over residues 30–56 the composition is skewed to polar residues; that stretch reads PQLSTPLKSHFQNSSIAPQDNPITINA. 3 disordered regions span residues 30-104, 142-170, and 227-264; these read PQLS…SPSS, TMET…LPPP, and TETK…KEEE. Low complexity-rich tracts occupy residues 58-88 and 142-151; these read SLPS…NSSS and TMETRTTSTT. In terms of domain architecture, FAF spans 166–217; the sequence is SLPPPLTSMIGFDCIEVKSHRENGRLVMMATRPPPRNRCLQDRSNGCVRLAI. A compositionally biased stretch (acidic residues) spans 233-262; it reads KEEEEEETIETVRDNEEEIPEYKEEEEEKE.

It belongs to the fantastic four family. In terms of tissue distribution, expressed in the shoot apex and young siliques. Detected in provascular and vascular tissue, but not in the vegetative meristem. In inflorescences, restricted to the base of the flower and to the vasculature of the stem and the pedicels, but absent from young flowers. Detected in the center of the inflorescence meristem.

In terms of biological role, regulates the size of the shoot meristem by modulating the CLV3-WUS feedback loop. Can repress WUS but is under negative control by CLV3. The sequence is that of Protein FANTASTIC FOUR 4 (FAF4) from Arabidopsis thaliana (Mouse-ear cress).